The primary structure comprises 153 residues: Protein ElaA (153 aa).

Residues 7 to 151 form the N-acetyltransferase domain; the sequence is LHHSELSVSQ…PHIGMAREVI (145 aa).

It belongs to the UPF0039 (ElaA) family.

This Escherichia coli (strain K12) protein is Protein ElaA (elaA).